Here is a 268-residue protein sequence, read N- to C-terminus: Undecaprenyl-diphosphatase (268 aa).

7 consecutive transmembrane segments (helical) span residues 42 to 62, 86 to 106, 108 to 128, 158 to 178, 184 to 204, 218 to 238, and 246 to 266; these read VPGK…ICVL, AIFV…DFIL, VLFT…AIVV, IALV…LLVG, AAEF…VVSL, LIAA…KWLV, and FTVF…YFSL.

Belongs to the UppP family.

The protein localises to the cell inner membrane. The enzyme catalyses di-trans,octa-cis-undecaprenyl diphosphate + H2O = di-trans,octa-cis-undecaprenyl phosphate + phosphate + H(+). Its function is as follows. Catalyzes the dephosphorylation of undecaprenyl diphosphate (UPP). Confers resistance to bacitracin. This is Undecaprenyl-diphosphatase from Parvibaculum lavamentivorans (strain DS-1 / DSM 13023 / NCIMB 13966).